The sequence spans 77 residues: Defensin-like protein 1 (77 aa).

Residues 1–30 form the signal peptide; the sequence is MKLSVRFISAALLLFMVFIATGMGPVTVEA. Disulfide bonds link Cys-33–Cys-77, Cys-44–Cys-64, Cys-50–Cys-71, and Cys-54–Cys-73.

Belongs to the DEFL family. Expressed in the whole plant except roots.

Its subcellular location is the secreted. Its function is as follows. Confers broad-spectrum resistance to pathogens. This Arabidopsis thaliana (Mouse-ear cress) protein is Defensin-like protein 1 (PDF2.3).